A 439-amino-acid chain; its full sequence is Dihydroorotate dehydrogenase (quinone), mitochondrial (439 aa).

A mitochondrion-targeting transit peptide spans 1-22; it reads MMHRVGFNVIGRRSFFTVNARR. Residues 37–53 form a helical membrane-spanning segment; that stretch reads LTALLLAGSAGYLYFMN. FMN contacts are provided by residues 119-123 and Ser-143; that span reads AGLDK. Residue Lys-123 coordinates substrate. Residue 168-172 participates in substrate binding; that stretch reads NRYGF. FMN is bound by residues Asn-215 and Asn-245. 245–250 contacts substrate; the sequence is NVSSPN. Ser-248 acts as the Nucleophile in catalysis. Residues Lys-296 and Ser-324 each coordinate FMN. Position 325 to 326 (325 to 326) interacts with substrate; the sequence is NT. FMN is bound by residues Gly-350, Gly-380, and 401–402; that span reads YT.

Belongs to the dihydroorotate dehydrogenase family. Type 2 subfamily. FMN serves as cofactor.

It is found in the mitochondrion inner membrane. The enzyme catalyses (S)-dihydroorotate + a quinone = orotate + a quinol. Its pathway is pyrimidine metabolism; UMP biosynthesis via de novo pathway; orotate from (S)-dihydroorotate (quinone route): step 1/1. In terms of biological role, catalyzes the conversion of dihydroorotate to orotate with quinone as electron acceptor. This chain is Dihydroorotate dehydrogenase (quinone), mitochondrial (URA9), found in Candida glabrata (strain ATCC 2001 / BCRC 20586 / JCM 3761 / NBRC 0622 / NRRL Y-65 / CBS 138) (Yeast).